Consider the following 444-residue polypeptide: Phosphoglucosamine mutase (444 aa).

The Phosphoserine intermediate role is filled by Ser102. Mg(2+) contacts are provided by Ser102, Asp241, Asp243, and Asp245. Position 102 is a phosphoserine (Ser102).

It belongs to the phosphohexose mutase family. Mg(2+) serves as cofactor. Activated by phosphorylation.

It carries out the reaction alpha-D-glucosamine 1-phosphate = D-glucosamine 6-phosphate. In terms of biological role, catalyzes the conversion of glucosamine-6-phosphate to glucosamine-1-phosphate. The polypeptide is Phosphoglucosamine mutase (Paracidovorax citrulli (strain AAC00-1) (Acidovorax citrulli)).